The following is a 302-amino-acid chain: Protoheme IX farnesyltransferase (302 aa).

9 helical membrane passes run 28-48 (LALL…SLDP), 50-70 (MLAL…AFNM), 93-115 (LNPY…SAAA), 119-138 (YVAL…YTQL), 147-167 (IIFG…AAAG), 172-192 (GGVL…WFLG), 219-239 (LIAV…LYYG), 242-262 (FLTA…IGGF), and 271-291 (ALKL…ILPL).

The protein belongs to the UbiA prenyltransferase family. Protoheme IX farnesyltransferase subfamily.

It localises to the cell membrane. The catalysed reaction is heme b + (2E,6E)-farnesyl diphosphate + H2O = Fe(II)-heme o + diphosphate. It participates in porphyrin-containing compound metabolism; heme O biosynthesis; heme O from protoheme: step 1/1. Converts heme B (protoheme IX) to heme O by substitution of the vinyl group on carbon 2 of heme B porphyrin ring with a hydroxyethyl farnesyl side group. The chain is Protoheme IX farnesyltransferase from Aeropyrum pernix (strain ATCC 700893 / DSM 11879 / JCM 9820 / NBRC 100138 / K1).